Reading from the N-terminus, the 178-residue chain is Cell division protein ZapC (178 aa).

The protein belongs to the ZapC family. As to quaternary structure, interacts directly with FtsZ.

It is found in the cytoplasm. Functionally, contributes to the efficiency of the cell division process by stabilizing the polymeric form of the cell division protein FtsZ. Acts by promoting interactions between FtsZ protofilaments and suppressing the GTPase activity of FtsZ. This is Cell division protein ZapC from Aeromonas hydrophila subsp. hydrophila (strain ATCC 7966 / DSM 30187 / BCRC 13018 / CCUG 14551 / JCM 1027 / KCTC 2358 / NCIMB 9240 / NCTC 8049).